A 69-amino-acid polypeptide reads, in one-letter code: Lantibiotic lichenicidin A2 (69 aa).

The propeptide occupies 1-37; that stretch reads MKNSAAREAFKGANHPAGMVSEEELKALVGGNDVNPE. Threonine 38 is modified (2-oxobutanoic acid). 3 positions are modified to (Z)-2,3-didehydrobutyrine: threonine 39, threonine 42, and threonine 43. A cross-link (lanthionine (Ser-Cys)) is located at residues 44–48; the sequence is SSWTC. At serine 45 the chain carries 2,3-didehydroalanine (Ser). 2 positions are modified to (Z)-2,3-didehydrobutyrine: threonine 50 and threonine 54. Positions 56–60 form a cross-link, lanthionine (Ser-Cys); the sequence is SASLC. Cross-links (beta-methyllanthionine (Thr-Cys)) lie at residues 62-65 and 66-69; these read TTKC and TSRC. At threonine 63 the chain carries (Z)-2,3-didehydrobutyrine.

In terms of processing, maturation of lantibiotics involves the enzymatic conversion of Thr, and Ser into dehydrated AA and the formation of thioether bonds with cysteine. This is followed by membrane translocation and cleavage of the modified precursor.

The protein resides in the secreted. The protein localises to the cell wall. Functionally, lanthionine-containing peptide antibiotic (lantibiotic) active on Gram-positive bacteria. The bactericidal activity of lantibiotics is based on depolarization of energized bacterial cytoplasmic membranes, initiated by the formation of aqueous transmembrane pores. When present individually, LchA2 exhibits activity towards L.lactis HP. When combined with LchA1, it displays activity towards a broad spectrum of non-pathogenic and pathogenic Gram-positive bacteria including strains of L.monocytogenes, methicillin-resistant S.aureus, S.pneumoniae and strains of vancomycin-resistant enterococci, but not towards E.faecium L4001 and BM4147-1. Combined LchA1 and LchA2 peptides also inhibit Bacillus sp. HIL-Y85/54728, L.lactis DPC3417 and B.halodurans C-125, which produce lantibiotics themselves. Inactivated by proteinase K and pronase E, but not by trypsin and chymotrypsin. This is Lantibiotic lichenicidin A2 from Bacillus licheniformis (strain ATCC 14580 / DSM 13 / JCM 2505 / CCUG 7422 / NBRC 12200 / NCIMB 9375 / NCTC 10341 / NRRL NRS-1264 / Gibson 46).